Here is a 455-residue protein sequence, read N- to C-terminus: UDP-N-acetylmuramoylalanine--D-glutamate ligase (455 aa).

ATP is bound at residue 119–125 (GTNGKTT).

It belongs to the MurCDEF family.

It is found in the cytoplasm. The enzyme catalyses UDP-N-acetyl-alpha-D-muramoyl-L-alanine + D-glutamate + ATP = UDP-N-acetyl-alpha-D-muramoyl-L-alanyl-D-glutamate + ADP + phosphate + H(+). The protein operates within cell wall biogenesis; peptidoglycan biosynthesis. Its function is as follows. Cell wall formation. Catalyzes the addition of glutamate to the nucleotide precursor UDP-N-acetylmuramoyl-L-alanine (UMA). The chain is UDP-N-acetylmuramoylalanine--D-glutamate ligase from Listeria monocytogenes serovar 1/2a (strain ATCC BAA-679 / EGD-e).